The primary structure comprises 217 residues: NADPH-dependent 3-demethoxyubiquinone 3-hydroxylase, mitochondrial (217 aa).

Tandem repeats lie at residues 48 to 129 (AVDQ…TALL) and 130 to 217 (GKEG…SERF). Residues 48 to 217 (AVDQIIRVDH…SAAIYLSERF (170 aa)) are 2 X approximate tandem repeats. Glu60, Glu90, His93, Glu142, Glu178, and His181 together coordinate Fe cation. NADH contacts are provided by Tyr212 and Arg216.

The protein belongs to the COQ7 family. In terms of assembly, component of a multi-subunit COQ enzyme complex. Interacts with COQ8B and COQ6. Interacts with COQ9. Fe cation is required as a cofactor.

It is found in the mitochondrion inner membrane. It carries out the reaction a 5-methoxy-2-methyl-3-(all-trans-polyprenyl)benzoquinone + NADH + O2 = a 3-demethylubiquinone + NAD(+) + H2O. It participates in cofactor biosynthesis; ubiquinone biosynthesis. Functionally, catalyzes the hydroxylation of the 5-methoxy-2-methyl-3-(all-trans-polyprenyl)benzoquinone at the C6 position and participates in the biosynthesis of ubiquinone. Catalyzes the reaction through a substrate-mediated reduction pathway, whereby NADH shuttles electrons to 5-methoxy-2-methyl-3-(all-trans-decaprenyl)benzoquinone, which then transfers the electrons to the two Fe(3+) centers. The binding of 5-methoxy-2-methyl-3-(all-trans-polyprenyl)benzoquinone (DMQn) mediates reduction of the diiron center by nicotinamide adenine dinucleotide (NADH) and initiates oxygen activation for subsequent DMQ hydroxylation. The physiological substrates are 5-methoxy-2-methyl-3-(all-trans-nonaprenyl)benzoquinone (DMQ(9)) and 5-methoxy-2-methyl-3-(all-trans-decaprenyl)benzoquinone (DMQ(10)), however in vitro the enzyme does not have any specificity concerning the length of the polyprenyl tail, and accepts tails of various lengths with similar efficiency. Also has a structural role in the COQ enzyme complex, stabilizing other COQ polypeptides. Involved in lifespan determination in a ubiquinone-independent manner. Plays a role in modulating mitochondrial stress responses, acting in the nucleus, perhaps via regulating gene expression, independent of its characterized mitochondrial function in ubiquinone biosynthesis. The sequence is that of NADPH-dependent 3-demethoxyubiquinone 3-hydroxylase, mitochondrial from Rattus norvegicus (Rat).